A 520-amino-acid chain; its full sequence is Leucine carboxyl methyltransferase 1 (520 aa).

Disordered regions lie at residues 1-116 and 142-174; these read MQRD…DDAV and TQEF…SIRR. Low complexity predominate over residues 79–89; it reads PSLRLSLGLPR. Composition is skewed to polar residues over residues 95-110 and 142-151; these read HSGQ…STAR and TQEFSSTLPS. S-adenosyl-L-methionine-binding positions include arginine 185, glycine 210, aspartate 237, 305–306, and glutamate 343; that span reads DV.

It belongs to the methyltransferase superfamily. LCMT family.

It catalyses the reaction [phosphatase 2A protein]-C-terminal L-leucine + S-adenosyl-L-methionine = [phosphatase 2A protein]-C-terminal L-leucine methyl ester + S-adenosyl-L-homocysteine. Methylates the carboxyl group of the C-terminal leucine residue of protein phosphatase 2A catalytic subunits to form alpha-leucine ester residues. The sequence is that of Leucine carboxyl methyltransferase 1 (PPM1) from Mycosarcoma maydis (Corn smut fungus).